The primary structure comprises 417 residues: Serine hydroxymethyltransferase (417 aa).

(6S)-5,6,7,8-tetrahydrofolate contacts are provided by residues leucine 121 and 125–127 (GHL). Lysine 229 is subject to N6-(pyridoxal phosphate)lysine. Position 355–357 (355–357 (SPF)) interacts with (6S)-5,6,7,8-tetrahydrofolate.

Belongs to the SHMT family. As to quaternary structure, homodimer. It depends on pyridoxal 5'-phosphate as a cofactor.

The protein localises to the cytoplasm. It catalyses the reaction (6R)-5,10-methylene-5,6,7,8-tetrahydrofolate + glycine + H2O = (6S)-5,6,7,8-tetrahydrofolate + L-serine. It functions in the pathway one-carbon metabolism; tetrahydrofolate interconversion. The protein operates within amino-acid biosynthesis; glycine biosynthesis; glycine from L-serine: step 1/1. Catalyzes the reversible interconversion of serine and glycine with tetrahydrofolate (THF) serving as the one-carbon carrier. This reaction serves as the major source of one-carbon groups required for the biosynthesis of purines, thymidylate, methionine, and other important biomolecules. Also exhibits THF-independent aldolase activity toward beta-hydroxyamino acids, producing glycine and aldehydes, via a retro-aldol mechanism. This is Serine hydroxymethyltransferase from Klebsiella pneumoniae subsp. pneumoniae (strain ATCC 700721 / MGH 78578).